The chain runs to 666 residues: uncharacterized protein (666 aa).

This is an uncharacterized protein from Acanthamoeba polyphaga mimivirus (APMV).